Consider the following 32-residue polypeptide: Unknown protein from spot 206 of 2D-PAGE of etiolated coleoptile (32 aa).

This is Unknown protein from spot 206 of 2D-PAGE of etiolated coleoptile from Zea mays (Maize).